Here is a 313-residue protein sequence, read N- to C-terminus: tRNA dimethylallyltransferase (313 aa).

ATP is bound at residue 17–24; it reads GPTASGKT. Position 19 to 24 (19 to 24) interacts with substrate; that stretch reads TASGKT. Interaction with substrate tRNA stretches follow at residues 42–45, 166–170, and 247–252; these read DSAL, QRLSR, and RCVGYR.

Belongs to the IPP transferase family. Monomer. It depends on Mg(2+) as a cofactor.

The enzyme catalyses adenosine(37) in tRNA + dimethylallyl diphosphate = N(6)-dimethylallyladenosine(37) in tRNA + diphosphate. Its function is as follows. Catalyzes the transfer of a dimethylallyl group onto the adenine at position 37 in tRNAs that read codons beginning with uridine, leading to the formation of N6-(dimethylallyl)adenosine (i(6)A). The polypeptide is tRNA dimethylallyltransferase (Pectobacterium atrosepticum (strain SCRI 1043 / ATCC BAA-672) (Erwinia carotovora subsp. atroseptica)).